A 277-amino-acid polypeptide reads, in one-letter code: Ribosomal RNA small subunit methyltransferase A (277 aa).

6 residues coordinate S-adenosyl-L-methionine: Asn18, Leu20, Gly45, Glu66, Asp89, and Asn110.

The protein belongs to the class I-like SAM-binding methyltransferase superfamily. rRNA adenine N(6)-methyltransferase family. RsmA subfamily.

The protein resides in the cytoplasm. The enzyme catalyses adenosine(1518)/adenosine(1519) in 16S rRNA + 4 S-adenosyl-L-methionine = N(6)-dimethyladenosine(1518)/N(6)-dimethyladenosine(1519) in 16S rRNA + 4 S-adenosyl-L-homocysteine + 4 H(+). In terms of biological role, specifically dimethylates two adjacent adenosines (A1518 and A1519) in the loop of a conserved hairpin near the 3'-end of 16S rRNA in the 30S particle. May play a critical role in biogenesis of 30S subunits. The chain is Ribosomal RNA small subunit methyltransferase A from Cupriavidus taiwanensis (strain DSM 17343 / BCRC 17206 / CCUG 44338 / CIP 107171 / LMG 19424 / R1) (Ralstonia taiwanensis (strain LMG 19424)).